The following is a 275-amino-acid chain: Large ribosomal subunit protein uL2 (275 aa).

2 disordered regions span residues 36-55 and 224-263; these read GLTG…RRMG and VVMN…RQNK.

The protein belongs to the universal ribosomal protein uL2 family. As to quaternary structure, part of the 50S ribosomal subunit. Forms a bridge to the 30S subunit in the 70S ribosome.

One of the primary rRNA binding proteins. Required for association of the 30S and 50S subunits to form the 70S ribosome, for tRNA binding and peptide bond formation. It has been suggested to have peptidyltransferase activity; this is somewhat controversial. Makes several contacts with the 16S rRNA in the 70S ribosome. The chain is Large ribosomal subunit protein uL2 from Rhodospirillum centenum (strain ATCC 51521 / SW).